We begin with the raw amino-acid sequence, 358 residues long: Sulfate/thiosulfate import ATP-binding protein CysA 1 (358 aa).

Residues 3-237 (IQVENIRKAF…PASAFVYGFL (235 aa)) form the ABC transporter domain. 35–42 (GPSGCGKT) is a binding site for ATP.

Belongs to the ABC transporter superfamily. Sulfate/tungstate importer (TC 3.A.1.6) family. As to quaternary structure, the complex is composed of two ATP-binding proteins (CysA), two transmembrane proteins (CysT and CysW) and a solute-binding protein (CysP).

The protein localises to the cell inner membrane. It catalyses the reaction sulfate(out) + ATP + H2O = sulfate(in) + ADP + phosphate + H(+). The enzyme catalyses thiosulfate(out) + ATP + H2O = thiosulfate(in) + ADP + phosphate + H(+). Part of the ABC transporter complex CysAWTP involved in sulfate/thiosulfate import. Responsible for energy coupling to the transport system. This chain is Sulfate/thiosulfate import ATP-binding protein CysA 1, found in Chromobacterium violaceum (strain ATCC 12472 / DSM 30191 / JCM 1249 / CCUG 213 / NBRC 12614 / NCIMB 9131 / NCTC 9757 / MK).